We begin with the raw amino-acid sequence, 286 residues long: B3 domain-containing protein REM11 (286 aa).

The segment at residues M1–Q70 is a DNA-binding region (TF-B3 1). The disordered stretch occupies residues S68–S114. A compositionally biased stretch (basic and acidic residues) spans K78–S89. The segment at residues N119–F219 is a DNA-binding region (TF-B3 2).

Its subcellular location is the nucleus. The chain is B3 domain-containing protein REM11 (REM11) from Arabidopsis thaliana (Mouse-ear cress).